Here is a 291-residue protein sequence, read N- to C-terminus: Probable alpha-L-glutamate ligase (291 aa).

The ATP-grasp domain maps to 104–287 (HQLLASQGID…VAGTIIQHLE (184 aa)). ATP contacts are provided by residues Lys141, 178-179 (EF), Asp187, and 211-213 (RSN). Mg(2+)-binding residues include Asp248, Glu260, and Asn262. Asp248, Glu260, and Asn262 together coordinate Mn(2+).

This sequence belongs to the RimK family. It depends on Mg(2+) as a cofactor. Mn(2+) is required as a cofactor.

This chain is Probable alpha-L-glutamate ligase, found in Xanthomonas campestris pv. campestris (strain 8004).